The following is a 461-amino-acid chain: Transforming growth factor beta-1-induced transcript 1 protein (461 aa).

At Met-1 the chain carries N-acetylmethionine. The tract at residues 1–87 (MEDLDALLSD…PFSSSSGVLG (87 aa)) is disordered. Residues 1 to 200 (MEDLDALLSD…GSPSPPEPTG (200 aa)) form a transcription activation region. Residues 1 to 240 (MEDLDALLSD…CNKPIAGQVV (240 aa)) form an interaction with PTK2B/PYK2 region. An LD motif 1 motif is present at residues 3 to 15 (DLDALLSDLETTT). Thr-33 carries the phosphothreonine modification. Tyr-38 bears the Phosphotyrosine mark. The segment covering 40–52 (HQPQTGSGESSGA) has biased composition (polar residues). Tyr-60 carries the phosphotyrosine; by FAK2 and FYN modification. Ser-68 is subject to Phosphoserine. An interaction with PTK2/FAK1 region spans residues 83–136 (SGVLGTGLCELDRLLQELNATQFNITDEIMSQFPSSKVASGEQKEDQSEDKKRP). An LD motif 2 motif is present at residues 92–104 (ELDRLLQELNATQ). Residues 116 to 152 (PSSKVASGEQKEDQSEDKKRPSLPSSPSPGLPKASAT) are disordered. A compositionally biased stretch (basic and acidic residues) spans 124 to 135 (EQKEDQSEDKKR). Ser-137, Ser-140, Ser-141, Ser-143, Ser-164, and Ser-186 each carry phosphoserine. Positions 157–168 (ELDRLMASLSDF) match the LD motif 3 motif. The interval 172–205 (NHLPASGPTQPPVVSSTNEGSPSPPEPTGKGSLD) is disordered. Polar residues predominate over residues 183–192 (PVVSSTNEGS). Thr-188 is subject to Phosphothreonine. 2 positions are modified to phosphoserine: Ser-192 and Ser-194. Positions 203-215 (SLDTMLGLLQSDL) match the LD motif 4 motif. 4 consecutive LIM zinc-binding domains span residues 226 to 285 (GLCG…RFSP), 286 to 343 (RCGF…QLFA), 344 to 403 (PRCQ…RRGS), and 404 to 461 (LCAT…KLFG). Ser-403 is modified (phosphoserine). The residue at position 407 (Thr-407) is a Phosphothreonine.

It belongs to the paxillin family. Homooligomer. Interacts with PPARG. Interacts with TRAF4. Interacts with CRIP2. Interacts with HSPB1. Interacts with ILK. Interacts with LIMS1 and LIMS2. Interacts with NCK2. Interacts with NUDT16L1. Interacts with PAK. Interacts with PTPN12. Interacts with TCF3. Interacts with TCF7L2. Interacts with VCL. Interacts (via LD motif 3) with GIT1. Also interacts with GIT2. Forms a complex with ARHGEF7. Interacts with AR/androgen receptor in a ligand-dependent manner. Interacts with CSK. Interacts with PTK2/FAK1 and PTK2B/PYK2. Interacts with SLC6A3 and SLC6A4. Interacts with NR3C1. Interacts with SMAD3. Interacts with MAPK15. Interacts with SRC. Interacts with LYN. Interacts with talin. Interacts (via LIM zinc-binding domain 2) with CBLC (via RING-type zinc finger); the interaction is direct and enhances CBLC E3 ubiquitin-protein ligase activity. Interacts with PARVA. Interacts with PXN. Post-translationally, phosphorylated by gonadotropin-releasing hormone-activated SRC. As to expression, expressed in platelets, smooth muscle and prostate stromal cells (at protein level).

It is found in the cell junction. It localises to the focal adhesion. The protein localises to the nucleus matrix. Its subcellular location is the cytoplasm. The protein resides in the cytoskeleton. Functionally, functions as a molecular adapter coordinating multiple protein-protein interactions at the focal adhesion complex and in the nucleus. Links various intracellular signaling modules to plasma membrane receptors and regulates the Wnt and TGFB signaling pathways. May also regulate SLC6A3 and SLC6A4 targeting to the plasma membrane hence regulating their activity. In the nucleus, functions as a nuclear receptor coactivator regulating glucocorticoid, androgen, mineralocorticoid and progesterone receptor transcriptional activity. May play a role in the processes of cell growth, proliferation, migration, differentiation and senescence. May have a zinc-dependent DNA-binding activity. The chain is Transforming growth factor beta-1-induced transcript 1 protein (TGFB1I1) from Homo sapiens (Human).